The sequence spans 184 residues: Adenylate kinase (184 aa).

Position 12 to 17 (12 to 17 (GAGKGT)) interacts with ATP. An NMP region spans residues 32-61 (STGELLRKEIDLDTDLGKQVKDIMNRGELV). Residues Thr-33, Arg-38, 59–61 (ELV), 85–88 (GYPR), and Gln-92 each bind AMP. Residues 126–132 (IRGRKDD) form an LID region. Arg-127 contributes to the ATP binding site. Positions 129 and 140 each coordinate AMP. An ATP-binding site is contributed by Gly-168.

The protein belongs to the adenylate kinase family. In terms of assembly, monomer.

Its subcellular location is the cytoplasm. The enzyme catalyses AMP + ATP = 2 ADP. It participates in purine metabolism; AMP biosynthesis via salvage pathway; AMP from ADP: step 1/1. Its function is as follows. Catalyzes the reversible transfer of the terminal phosphate group between ATP and AMP. Plays an important role in cellular energy homeostasis and in adenine nucleotide metabolism. The protein is Adenylate kinase of Prochlorococcus marinus subsp. pastoris (strain CCMP1986 / NIES-2087 / MED4).